The sequence spans 216 residues: Large ribosomal subunit protein bL25 (216 aa).

2 disordered regions span residues M1–R21 and S192–D216. Residues N195–D216 are compositionally biased toward basic and acidic residues.

It belongs to the bacterial ribosomal protein bL25 family. CTC subfamily. Part of the 50S ribosomal subunit; part of the 5S rRNA/L5/L18/L25 subcomplex. Contacts the 5S rRNA. Binds to the 5S rRNA independently of L5 and L18.

In terms of biological role, this is one of the proteins that binds to the 5S RNA in the ribosome where it forms part of the central protuberance. This Parvibaculum lavamentivorans (strain DS-1 / DSM 13023 / NCIMB 13966) protein is Large ribosomal subunit protein bL25.